The chain runs to 456 residues: Dihydroorotase (456 aa).

Zn(2+) is bound by residues His-60 and His-62. Substrate-binding positions include 62–64 and Asn-94; that span reads HFR. Positions 146, 180, 234, and 313 each coordinate Zn(2+). Asp-313 is a catalytic residue. Residue His-317 participates in substrate binding.

The protein belongs to the metallo-dependent hydrolases superfamily. DHOase family. Class I DHOase subfamily. The cofactor is Zn(2+).

The enzyme catalyses (S)-dihydroorotate + H2O = N-carbamoyl-L-aspartate + H(+). Its pathway is pyrimidine metabolism; UMP biosynthesis via de novo pathway; (S)-dihydroorotate from bicarbonate: step 3/3. Functionally, catalyzes the reversible cyclization of carbamoyl aspartate to dihydroorotate. This chain is Dihydroorotase, found in Methanosarcina mazei (strain ATCC BAA-159 / DSM 3647 / Goe1 / Go1 / JCM 11833 / OCM 88) (Methanosarcina frisia).